The primary structure comprises 132 residues: Large ribosomal subunit protein uL24 (132 aa).

This sequence belongs to the universal ribosomal protein uL24 family. Part of the 50S ribosomal subunit.

Functionally, one of two assembly initiator proteins, it binds directly to the 5'-end of the 23S rRNA, where it nucleates assembly of the 50S subunit. One of the proteins that surrounds the polypeptide exit tunnel on the outside of the subunit. The polypeptide is Large ribosomal subunit protein uL24 (Synechococcus sp. (strain JA-3-3Ab) (Cyanobacteria bacterium Yellowstone A-Prime)).